An 81-amino-acid polypeptide reads, in one-letter code: Photosystem I iron-sulfur center (81 aa).

2 consecutive 4Fe-4S ferredoxin-type domains span residues 1 to 31 (MSHKVKIYDTCIGCTQCVRACPLDVLEMVPW) and 39 to 68 (IASSPRTEDCVGCKRCETACPTDFLSIRVY). 8 residues coordinate [4Fe-4S] cluster: C11, C14, C17, C21, C48, C51, C54, and C58.

The cyanobacterial PSI reaction center is composed of one copy each of PsaA,B,C,D,E,F,I,J,K,L,M and X, and forms trimeric complexes. [4Fe-4S] cluster is required as a cofactor.

The protein resides in the cellular thylakoid membrane. It carries out the reaction reduced [plastocyanin] + hnu + oxidized [2Fe-2S]-[ferredoxin] = oxidized [plastocyanin] + reduced [2Fe-2S]-[ferredoxin]. Functionally, apoprotein for the two 4Fe-4S centers FA and FB of photosystem I (PSI); essential for photochemical activity. FB is the terminal electron acceptor of PSI, donating electrons to ferredoxin. The C-terminus interacts with PsaA/B/D and helps assemble the protein into the PSI complex. Required for binding of PsaD and PsaE to PSI. PSI is a plastocyanin/cytochrome c6-ferredoxin oxidoreductase, converting photonic excitation into a charge separation, which transfers an electron from the donor P700 chlorophyll pair to the spectroscopically characterized acceptors A0, A1, FX, FA and FB in turn. The chain is Photosystem I iron-sulfur center from Rippkaea orientalis (strain PCC 8801 / RF-1) (Cyanothece sp. (strain PCC 8801)).